A 105-amino-acid polypeptide reads, in one-letter code: Endogenous retrovirus group K member 6 Rec protein (105 aa).

The segment at 1-49 is disordered; sequence MNPSEMQRKAPPRRRRHRNRAPLTHKMNKMVTSEEQMKLPSTKKAEPPT. Positions 10-20 are enriched in basic residues; the sequence is APPRRRRHRNR. Positions 13-20 match the Nuclear localization signal motif; the sequence is RRRRHRNR. A Nuclear export signal motif is present at residues 50-59; sequence WAQLKKLTQL.

In terms of assembly, forms homodimers, homotrimers, and homotetramers via a C-terminal domain. Associates with XPO1 and with ZNF145. Expressed at higher level in placenta, expressed at lower level in several organs and cell lines.

Its subcellular location is the cytoplasm. The protein resides in the nucleus. It localises to the nucleolus. Its function is as follows. Retroviral replication requires the nuclear export and translation of unspliced, singly-spliced and multiply-spliced derivatives of the initial genomic transcript. Rec interacts with a highly structured RNA element (RcRE) present in the viral 3'LTR and recruits the cellular nuclear export machinery. This permits export to the cytoplasm of unspliced genomic or incompletely spliced subgenomic viral transcripts. This chain is Endogenous retrovirus group K member 6 Rec protein (ERVK-6), found in Homo sapiens (Human).